The chain runs to 135 residues: Large ribosomal subunit protein uL16c (135 aa).

This sequence belongs to the universal ribosomal protein uL16 family. In terms of assembly, part of the 50S ribosomal subunit.

The protein localises to the plastid. The protein resides in the chloroplast. The protein is Large ribosomal subunit protein uL16c of Nandina domestica (Heavenly bamboo).